The chain runs to 254 residues: UPF0246 protein FTM_0239 (254 aa).

Belongs to the UPF0246 family.

This chain is UPF0246 protein FTM_0239, found in Francisella tularensis subsp. mediasiatica (strain FSC147).